The primary structure comprises 287 residues: Large ribosomal subunit protein uL2 (287 aa).

Residues Arg221–Ser287 are disordered. Residues Lys258–Ser287 are compositionally biased toward basic residues.

Belongs to the universal ribosomal protein uL2 family. As to quaternary structure, part of the 50S ribosomal subunit. Forms a bridge to the 30S subunit in the 70S ribosome.

Its function is as follows. One of the primary rRNA binding proteins. Required for association of the 30S and 50S subunits to form the 70S ribosome, for tRNA binding and peptide bond formation. It has been suggested to have peptidyltransferase activity; this is somewhat controversial. Makes several contacts with the 16S rRNA in the 70S ribosome. In Synechococcus sp. (strain CC9311), this protein is Large ribosomal subunit protein uL2.